We begin with the raw amino-acid sequence, 88 residues long: Small ribosomal subunit protein uS15 (88 aa).

It belongs to the universal ribosomal protein uS15 family. In terms of assembly, part of the 30S ribosomal subunit. Forms a bridge to the 50S subunit in the 70S ribosome, contacting the 23S rRNA.

Functionally, one of the primary rRNA binding proteins, it binds directly to 16S rRNA where it helps nucleate assembly of the platform of the 30S subunit by binding and bridging several RNA helices of the 16S rRNA. In terms of biological role, forms an intersubunit bridge (bridge B4) with the 23S rRNA of the 50S subunit in the ribosome. The protein is Small ribosomal subunit protein uS15 of Variovorax paradoxus (strain S110).